We begin with the raw amino-acid sequence, 465 residues long: Exoenzymes regulatory protein AepA (465 aa).

The signal sequence occupies residues 1–21; sequence MKFNVKMLSVTLGLFTSHAFA.

It belongs to the metallo-dependent hydrolases superfamily.

Functionally, involved in the control of extracellular enzymes production. Stimulates PEL, PEH, CEL, and PRT production. In Pectobacterium carotovorum subsp. carotovorum (Erwinia carotovora subsp. carotovora), this protein is Exoenzymes regulatory protein AepA (aepA).